Consider the following 285-residue polypeptide: NADPH-dependent 7-cyano-7-deazaguanine reductase (285 aa).

Substrate is bound at residue 80–82 (VES). 82-83 (SK) lines the NADPH pocket. Catalysis depends on Cys-191, which acts as the Thioimide intermediate. Asp-198 serves as the catalytic Proton donor. 231–232 (HE) contacts substrate. 260–261 (RG) provides a ligand contact to NADPH.

The protein belongs to the GTP cyclohydrolase I family. QueF type 2 subfamily. Homodimer.

It is found in the cytoplasm. The enzyme catalyses 7-aminomethyl-7-carbaguanine + 2 NADP(+) = 7-cyano-7-deazaguanine + 2 NADPH + 3 H(+). It participates in tRNA modification; tRNA-queuosine biosynthesis. Functionally, catalyzes the NADPH-dependent reduction of 7-cyano-7-deazaguanine (preQ0) to 7-aminomethyl-7-deazaguanine (preQ1). The protein is NADPH-dependent 7-cyano-7-deazaguanine reductase of Psychrobacter cryohalolentis (strain ATCC BAA-1226 / DSM 17306 / VKM B-2378 / K5).